A 382-amino-acid chain; its full sequence is uncharacterized protein (382 aa).

The chain crosses the membrane as a helical span at residues 1-21 (MKIILVVFVLIFVGVIGFNMI).

Belongs to the membrane fusion protein (MFP) (TC 8.A.1) family.

The protein localises to the membrane. This is an uncharacterized protein from Haemophilus influenzae (strain ATCC 51907 / DSM 11121 / KW20 / Rd).